The following is a 238-amino-acid chain: Cysteine-rich venom protein (238 aa).

Positions 1-19 (MIAFIVLLSLAAVLQQSSG) are cleaved as a signal peptide. The SCP domain maps to 38–164 (VDKHNALRRS…STKYLYVCQY (127 aa)). Disulfide bonds link C75–C153, C92–C165, C148–C162, C184–C191, C187–C196, C200–C233, C209–C227, and C218–C231. Residues 200–233 (CKYEDAFTNCKALAKKTKCKTEWIKSKCPATCFC) form the ShKT domain.

It belongs to the CRISP family. As to expression, expressed by the venom gland.

It is found in the secreted. Its function is as follows. Blocks contraction of smooth muscle elicited by high potassium-induced depolarization, but does not block caffeine-stimulated contraction. May target voltage-gated calcium channels on smooth muscle. This is Cysteine-rich venom protein from Austrelaps superbus (Lowland copperhead snake).